The sequence spans 739 residues: Ent-kaurene synthase-like 3 (739 aa).

Mg(2+) is bound by residues Asp-475, Asp-479, Asn-619, Thr-623, and Glu-627. Positions 475 to 479 match the DDXXD motif motif; that stretch reads DDFFD.

It belongs to the terpene synthase family. The cofactor is Mg(2+). As to expression, expressed in roots and stems.

The sequence is that of Ent-kaurene synthase-like 3 (KSL3) from Oryza sativa subsp. japonica (Rice).